A 262-amino-acid chain; its full sequence is Light-harvesting complex-like protein 3 isotype 1, chloroplastic (262 aa).

Residues 1-39 constitute a chloroplast transit peptide; sequence MALFSPPISSSSLQNPNFIPKFSFSLLSSNRFSLLSVTR. 2 helical membrane-spanning segments follow: residues 180–200 and 202–222; these read AAMIGFFMAYFVDSLTGVGLV and QMGNFFCKTLLFVAVAGVLFI.

In terms of assembly, interacts with GGR. Forms homodimer, and heterodimer with LIL3.2. Expressed in photosynthetically active tissues (at protein level).

The protein localises to the plastid. Its subcellular location is the chloroplast thylakoid membrane. Light-harvesting-like protein required for biosynthesis of phytylated chlorophylls and alpha-tocopherol in green seedlings. Functions by anchoring geranylgeranyl reductase (GGR) in the thylakoid membrane, leading to the stabilization of GGR activity. Binds chlorophyll a in the thylakoid membrane. Plays a role in the regulation of chlorophyll biosynthesis under light stress and under standard growth conditions. This is Light-harvesting complex-like protein 3 isotype 1, chloroplastic (LIL3.1) from Arabidopsis thaliana (Mouse-ear cress).